Reading from the N-terminus, the 321-residue chain is Protein APA1 (321 aa).

The disordered stretch occupies residues 50–70 (SLIEKPERGQTPEGEDPLGKP). K54 serves as a coordination point for substrate. A Phosphothreonine modification is found at T60. Substrate contacts are provided by residues 93–94 (NK), N145, and 151–154 (GSSL). H158 (nucleophile) is an active-site residue. Substrate is bound by residues Q160, 273 to 275 (NST), M280, and K284.

It belongs to the ATP adenylyltransferase family. As to quaternary structure, monomer. A divalent metal cation is required as a cofactor. The N-terminus is blocked.

The protein resides in the cytoplasm. The protein localises to the nucleus. It catalyses the reaction ADP + ATP + H(+) = P(1),P(4)-bis(5'-adenosyl) tetraphosphate + phosphate. The enzyme catalyses sulfate + ADP + H(+) = adenosine 5'-phosphosulfate + phosphate. Its function is as follows. Ap4A phosphorylase catalyzes the phosphorolytic degradation of bis(5'-adenosyl) tetraphosphate (Ap4A) into ADP and ATP. Can also use other Np4N' nucleotides (where N and N' stand for A,C,G or U) as substrates with equal efficiency. Cannot catalyze the reverse reaction. Additionally, this enzyme can also catalyze the phosphorolytic degradation of adenosine 5'-phosphosulfate (AMPS) into ADP and sulfate, the reversible exchange reaction between inorganic phosphate and the beta-phosphate of a nucleoside diphosphate (NDP), and the synthesis of Ap4A from AMPS plus ATP. In Saccharomyces cerevisiae (strain ATCC 204508 / S288c) (Baker's yeast), this protein is Protein APA1.